Here is a 246-residue protein sequence, read N- to C-terminus: Eukaryotic translation initiation factor 6 (246 aa).

Phosphoserine; by CK1 occurs at positions 174 and 175.

This sequence belongs to the eIF-6 family. As to quaternary structure, monomer. Associates with the 60S ribosomal subunit. Phosphorylation at Ser-174 and Ser-175 promotes nuclear export.

The protein localises to the cytoplasm. Its subcellular location is the nucleus. The protein resides in the nucleolus. In terms of biological role, binds to the 60S ribosomal subunit and prevents its association with the 40S ribosomal subunit to form the 80S initiation complex in the cytoplasm. Is also involved in ribosome biogenesis. Associates with pre-60S subunits in the nucleus and is involved in its nuclear export. The protein is Eukaryotic translation initiation factor 6 of Verticillium alfalfae (strain VaMs.102 / ATCC MYA-4576 / FGSC 10136) (Verticillium wilt of alfalfa).